Consider the following 80-residue polypeptide: uncharacterized protein (80 aa).

2 consecutive 4Fe-4S ferredoxin-type domains span residues 21–49 (KIIE…AIKN) and 50–80 (NRVV…LYDA). [4Fe-4S] cluster is bound by residues Cys30, Cys33, Cys36, Cys40, Cys60, Cys63, Cys66, and Cys70.

It depends on [4Fe-4S] cluster as a cofactor.

This is an uncharacterized protein from Methanocaldococcus jannaschii (strain ATCC 43067 / DSM 2661 / JAL-1 / JCM 10045 / NBRC 100440) (Methanococcus jannaschii).